Reading from the N-terminus, the 442-residue chain is Alpha-1,6-mannosyl-glycoprotein 2-beta-N-acetylglucosaminyltransferase (442 aa).

Residues 1–9 lie on the Cytoplasmic side of the membrane; that stretch reads MRFRIYKRK. A helical; Signal-anchor for type II membrane protein membrane pass occupies residues 10 to 29; that stretch reads VLILTLVVAACGFVLWSSNG. Residues 30-442 lie on the Lumenal side of the membrane; sequence RQRKNDALAP…ELCKSYRRLQ (413 aa). N-linked (GlcNAc...) asparagine glycosylation is found at Asn64 and Asn81. Substrate-binding positions include 118 to 122 and Asp149; that span reads QVHNR. Cys191 and Cys205 are disulfide-bonded. Substrate is bound at residue 224-228; sequence QTKHH. Asp256 is a binding site for Mn(2+). The cysteines at positions 278 and 281 are disulfide-linked. Arg293 is a substrate binding site. Intrachain disulfides connect Cys329-Cys352, Cys334-Cys435, and Cys373-Cys381. His369 is a binding site for Mn(2+).

The protein belongs to the glycosyltransferase 16 (GT16) protein family. Homodimer. It depends on Mn(2+) as a cofactor. As to expression, detected in liver (at protein level). Detected in liver, brain, thymus and spleen.

The protein resides in the golgi apparatus membrane. It catalyses the reaction an N(4)-{beta-D-GlcNAc-(1-&gt;2)-alpha-D-Man-(1-&gt;3)-[alpha-D-Man-(1-&gt;6)]-beta-D-Man-(1-&gt;4)-beta-D-GlcNAc-(1-&gt;4)-beta-D-GlcNAc}-L-asparaginyl-[protein] + UDP-N-acetyl-alpha-D-glucosamine = N(4)-{beta-D-GlcNAc-(1-&gt;2)-alpha-D-Man-(1-&gt;3)-[beta-D-GlcNAc-(1-&gt;2)-alpha-D-Man-(1-&gt;6)]-beta-D-Man-(1-&gt;4)-beta-D-GlcNAc-(1-&gt;4)-beta-D-GlcNAc}-L-asparaginyl-[protein] + UDP + H(+). The protein operates within protein modification; protein glycosylation. Functionally, plays an essential role in protein N-glycosylation. Catalyzes the transfer of N-acetylglucosamine (GlcNAc) onto the free terminal mannose moiety in the core structure of the nascent N-linked glycan chain, giving rise to the second branch in complex glycans. The polypeptide is Alpha-1,6-mannosyl-glycoprotein 2-beta-N-acetylglucosaminyltransferase (Mgat2) (Rattus norvegicus (Rat)).